A 177-amino-acid chain; its full sequence is Large ribosomal subunit protein uL10 (177 aa).

The protein belongs to the universal ribosomal protein uL10 family. Part of the ribosomal stalk of the 50S ribosomal subunit. The N-terminus interacts with L11 and the large rRNA to form the base of the stalk. The C-terminus forms an elongated spine to which L12 dimers bind in a sequential fashion forming a multimeric L10(L12)X complex.

Functionally, forms part of the ribosomal stalk, playing a central role in the interaction of the ribosome with GTP-bound translation factors. This chain is Large ribosomal subunit protein uL10, found in Xanthomonas axonopodis pv. citri (strain 306).